Reading from the N-terminus, the 438-residue chain is 23S rRNA (uracil(1939)-C(5))-methyltransferase RlmD (438 aa).

Residues Leu11 to Lys69 enclose the TRAM domain. [4Fe-4S] cluster-binding residues include Cys82, Cys88, Cys91, and Cys169. The S-adenosyl-L-methionine site is built by Gln272, Phe301, Asn306, Glu322, Asn349, and Asp370. The active-site Nucleophile is Cys396.

This sequence belongs to the class I-like SAM-binding methyltransferase superfamily. RNA M5U methyltransferase family. RlmD subfamily.

It catalyses the reaction uridine(1939) in 23S rRNA + S-adenosyl-L-methionine = 5-methyluridine(1939) in 23S rRNA + S-adenosyl-L-homocysteine + H(+). Catalyzes the formation of 5-methyl-uridine at position 1939 (m5U1939) in 23S rRNA. The sequence is that of 23S rRNA (uracil(1939)-C(5))-methyltransferase RlmD from Vibrio vulnificus (strain YJ016).